Here is a 242-residue protein sequence, read N- to C-terminus: Ribonuclease PH (242 aa).

Residues R86 and 124-126 (GTR) contribute to the phosphate site.

It belongs to the RNase PH family. In terms of assembly, homohexameric ring arranged as a trimer of dimers.

It catalyses the reaction tRNA(n+1) + phosphate = tRNA(n) + a ribonucleoside 5'-diphosphate. Its function is as follows. Phosphorolytic 3'-5' exoribonuclease that plays an important role in tRNA 3'-end maturation. Removes nucleotide residues following the 3'-CCA terminus of tRNAs; can also add nucleotides to the ends of RNA molecules by using nucleoside diphosphates as substrates, but this may not be physiologically important. Probably plays a role in initiation of 16S rRNA degradation (leading to ribosome degradation) during starvation. The chain is Ribonuclease PH from Caulobacter sp. (strain K31).